A 152-amino-acid polypeptide reads, in one-letter code: Large ribosomal subunit protein bL9 (152 aa).

Belongs to the bacterial ribosomal protein bL9 family.

In terms of biological role, binds to the 23S rRNA. This Prochlorococcus marinus (strain SARG / CCMP1375 / SS120) protein is Large ribosomal subunit protein bL9.